The sequence spans 206 residues: Small ribosomal subunit protein uS4 (206 aa).

Over residues 1 to 16 (MTKRQESKYKIDRRMG) the composition is skewed to basic and acidic residues. The interval 1–46 (MTKRQESKYKIDRRMGENIWGRPKSPVNRREYGPGQHGQRRKGKLS) is disordered. An S4 RNA-binding domain is found at 94 to 154 (RRLDAVVYRA…EKSKQLAIVL (61 aa)).

This sequence belongs to the universal ribosomal protein uS4 family. Part of the 30S ribosomal subunit. Contacts protein S5. The interaction surface between S4 and S5 is involved in control of translational fidelity.

In terms of biological role, one of the primary rRNA binding proteins, it binds directly to 16S rRNA where it nucleates assembly of the body of the 30S subunit. With S5 and S12 plays an important role in translational accuracy. This Parvibaculum lavamentivorans (strain DS-1 / DSM 13023 / NCIMB 13966) protein is Small ribosomal subunit protein uS4.